The chain runs to 603 residues: Terpenoid synthase 22 (603 aa).

Residues Asp-356, Asp-360, Asn-500, and Glu-508 each coordinate Mg(2+). Positions 356-360 (DDTCD) match the DDXXD motif motif.

It belongs to the terpene synthase family. Tpsa subfamily. The cofactor is Mg(2+). It depends on Mn(2+) as a cofactor. As to expression, predominantly expressed in siliques but also in flowers.

The protein resides in the cytoplasm. The protein operates within secondary metabolite biosynthesis; terpenoid biosynthesis. Its function is as follows. Involved in terpene biosynthesis in roots. Possesses sesquiterpene (C15) synthase activity in vitro. Does not seem to be involved in diterpene (C20) biosynthesis. The protein is Terpenoid synthase 22 of Arabidopsis thaliana (Mouse-ear cress).